The chain runs to 431 residues: UDP-N-acetylglucosamine 1-carboxyvinyltransferase (431 aa).

24 to 25 (KN) contacts phosphoenolpyruvate. Arg95 contacts UDP-N-acetyl-alpha-D-glucosamine. Asp119 (proton donor) is an active-site residue. UDP-N-acetyl-alpha-D-glucosamine contacts are provided by Asp314 and Met336.

It belongs to the EPSP synthase family. MurA subfamily.

It is found in the cytoplasm. The catalysed reaction is phosphoenolpyruvate + UDP-N-acetyl-alpha-D-glucosamine = UDP-N-acetyl-3-O-(1-carboxyvinyl)-alpha-D-glucosamine + phosphate. The protein operates within cell wall biogenesis; peptidoglycan biosynthesis. In terms of biological role, cell wall formation. Adds enolpyruvyl to UDP-N-acetylglucosamine. This Bradyrhizobium diazoefficiens (strain JCM 10833 / BCRC 13528 / IAM 13628 / NBRC 14792 / USDA 110) protein is UDP-N-acetylglucosamine 1-carboxyvinyltransferase.